The following is a 458-amino-acid chain: Flavonol 3-O-glucosyltransferase F3GT2 (458 aa).

The Proton acceptor role is filled by histidine 20. Histidine 20 lines the an anthocyanidin pocket. Aspartate 119 serves as the catalytic Charge relay. Position 141 (threonine 141) interacts with UDP-alpha-D-glucose. Histidine 150 contacts an anthocyanidin. The UDP-alpha-D-glucose site is built by alanine 333, glutamine 335, histidine 350, tryptophan 353, asparagine 354, serine 355, and glutamate 358. Glycine 373 is an an anthocyanidin binding site. UDP-alpha-D-glucose-binding residues include aspartate 374 and glutamine 375.

Belongs to the UDP-glycosyltransferase family. As to expression, expressed in ovaries.

The enzyme catalyses a flavonol + UDP-alpha-D-glucose = a flavonol 3-O-beta-D-glucoside + UDP + H(+). Its pathway is flavonoid metabolism. Catalyzes the glucosylation of quercetin. Preferentially uses UDP-glucose as sugar donor, but is also able to use UDP-gal and UDP-xyl. Is probably not required for the accumulation of anthocyanin in red-fleshed kiwifruit varieties. The chain is Flavonol 3-O-glucosyltransferase F3GT2 from Actinidia chinensis var. chinensis (Chinese soft-hair kiwi).